Reading from the N-terminus, the 45-residue chain is Mu-conotoxin-like Cal 12.1.2e (45 aa).

4 disulfides stabilise this stretch: C3–C16, C11–C28, C18–C33, and C27–C39. W17 bears the 6'-bromotryptophan mark. P23 carries the post-translational modification 4-hydroxyproline. Position 38 is a 6'-bromotryptophan (W38). P40 bears the 4-hydroxyproline mark.

In terms of tissue distribution, expressed by the venom duct.

It localises to the secreted. Mu-conotoxins block voltage-gated sodium channels. This toxin reversibly blocks voltage-gated sodium channel in cephalopods, with no alteration in the voltage dependence of sodium conductance or on the kinetics of inactivation. This chain is Mu-conotoxin-like Cal 12.1.2e, found in Californiconus californicus (California cone).